Here is a 511-residue protein sequence, read N- to C-terminus: Zinc finger CCCH-type with G patch domain-containing protein (511 aa).

The segment at 157 to 180 adopts a C3H1-type zinc-finger fold; that stretch reads PCSYYLEGECRFDEARCRYSHGAL. The segment at 254–281 is disordered; the sequence is DQEDELTSEDSSSVNDGSSDEEESDMDD. Over residues 271–281 the composition is skewed to acidic residues; the sequence is SSDEEESDMDD. One can recognise a G-patch domain in the interval 311–357; the sequence is TRGIGSKLMEKMGYIHGTGLGSDGRGIVTPVSAQILPKGRSLDACME. Disordered stretches follow at residues 409–433 and 478–511; these read GSDN…QHST and MHNQ…MFEF. Positions 414–425 are enriched in basic and acidic residues; it reads QQAEPEAKKAKA. Polar residues predominate over residues 478 to 493; sequence MHNQKQELATLQAQER. The segment covering 494–511 has biased composition (basic and acidic residues); it reads SLSKEQQTRKSKNKMFEF.

The protein resides in the nucleus. In terms of biological role, transcription repressor. The chain is Zinc finger CCCH-type with G patch domain-containing protein from Drosophila ananassae (Fruit fly).